Reading from the N-terminus, the 438-residue chain is MTTKEFLTIIQKEANQIDYERYLKQLVYKKVSSDNKIAIFEVNNKYIASWIKSKFTNLIQHCFEIYDGSKPTIEIKLSNEKKSKKEILKEQTQNESTESTILNPSYTFDSFVVGPSNQMAYNASLAVANKPGIQYNPLFIYGGTGLGKTHLLQAVGNHAIEKGNTVIYVTIEQFMNDFTFSIKNKNMEHFRNKYRKCDVLLIDDIQFLSGKEQTQEEFFHTFNELHNAKKQIVMTSDRLPSQIAGLVDRLKSRFEWGLTADVQIPGLETKIAIIEKKSELNGICLSREIINFIATNLDNSIREIEGVLIRINASASLLNQEITLPMVQGLLKEQIKETKENVKLPDIINIVANQLNIKPSDIKSKKRTATVANARRIVIYLVRELTHNSMPDIAKFLGMKDHSAISHNIKKANELIEKDENFKLIIENLKNKIINSRE.

The tract at residues 1-71 is domain I, interacts with DnaA modulators; sequence MTTKEFLTII…CFEIYDGSKP (71 aa). The interval 71–100 is domain II; it reads PTIEIKLSNEKKSKKEILKEQTQNESTEST. The segment at 101 to 315 is domain III, AAA+ region; that stretch reads ILNPSYTFDS…GVLIRINASA (215 aa). Gly145, Gly147, Lys148, and Thr149 together coordinate ATP. The domain IV, binds dsDNA stretch occupies residues 316–438; the sequence is SLLNQEITLP…LKNKIINSRE (123 aa).

The protein belongs to the DnaA family. As to quaternary structure, oligomerizes as a right-handed, spiral filament on DNA at oriC.

It is found in the cytoplasm. In terms of biological role, plays an essential role in the initiation and regulation of chromosomal replication. ATP-DnaA binds to the origin of replication (oriC) to initiate formation of the DNA replication initiation complex once per cell cycle. Binds the DnaA box (a 9 base pair repeat at the origin) and separates the double-stranded (ds)DNA. Forms a right-handed helical filament on oriC DNA; dsDNA binds to the exterior of the filament while single-stranded (ss)DNA is stabiized in the filament's interior. The ATP-DnaA-oriC complex binds and stabilizes one strand of the AT-rich DNA unwinding element (DUE), permitting loading of DNA polymerase. After initiation quickly degrades to an ADP-DnaA complex that is not apt for DNA replication. Binds acidic phospholipids. In Aliarcobacter butzleri (strain RM4018) (Arcobacter butzleri), this protein is Chromosomal replication initiator protein DnaA.